Reading from the N-terminus, the 1029-residue chain is Putative guanine nucleotide-exchange factor SED4 (1029 aa).

At 1-344 (MVFDSEYDLG…AMGGSNLWKS (344 aa)) the chain is on the cytoplasmic side. WD repeat units lie at residues 257-296 (KDYK…VIKL) and 300-339 (VHKD…MGGS). Residues 345–365 (LLRFLFNVMKLAVVVIWAHLF) form a helical; Signal-anchor for type II membrane protein membrane-spanning segment. Topologically, residues 366-1029 (YKYDLHHKLY…TQHNVINDEL (664 aa)) are lumenal. N-linked (GlcNAc...) asparagine glycosylation occurs at asparagine 579. The segment covering 579–592 (NASTSISIEESTNS) has biased composition (low complexity). Disordered stretches follow at residues 579–673 (NAST…NSIV), 710–732 (VVDE…VGSI), and 747–821 (EAVK…SQIS). Polar residues predominate over residues 593–603 (HSTFIESSSSL). Residue asparagine 608 is glycosylated (N-linked (GlcNAc...) asparagine). The span at 613-628 (SSREISSETSIIKEDM) shows a compositional bias: basic and acidic residues. Positions 633 to 642 (ENVSEQSATD) are enriched in polar residues. 2 N-linked (GlcNAc...) asparagine glycosylation sites follow: asparagine 634 and asparagine 647. Residues 643 to 654 (KVNKNQSIDKID) show a composition bias toward basic and acidic residues. Residues 655 to 672 (VSSSSSIPTSSEGSSNSI) show a composition bias toward low complexity. Residues 712 to 722 (DENHSESKLPT) show a composition bias toward basic and acidic residues. Asparagine 714, asparagine 754, asparagine 774, asparagine 792, asparagine 806, asparagine 855, asparagine 865, asparagine 874, asparagine 884, and asparagine 966 each carry an N-linked (GlcNAc...) asparagine glycan. 2 stretches are compositionally biased toward polar residues: residues 750–762 (KTSS…SQVT) and 771–782 (RVSNQSLSTVST). Positions 783–799 (EHTEMKESSNLTEKKPE) are enriched in basic and acidic residues. The segment covering 800 to 812 (SNSPESNLSESSL) has biased composition (low complexity). Low complexity predominate over residues 858-867 (LVDSQSSNSS). Disordered stretches follow at residues 858–886 (LVDS…QNET), 963–982 (TPEN…FMTE), and 1003–1029 (VAQQ…NDEL). A compositionally biased stretch (polar residues) spans 868–886 (VKTVETNVSQDEQTSQNET). The Prevents secretion from ER motif lies at 1026 to 1029 (NDEL).

This sequence belongs to the WD repeat SEC12 family.

It is found in the endoplasmic reticulum membrane. Its subcellular location is the golgi apparatus membrane. Its function is as follows. Putative guanine nucleotide-exchange factor (GEF) involved in the formation or budding of transport vesicles from the ER. Positive regulator of SAR1 probably through inhibition of the GTPase activation by SEC23. The protein is Putative guanine nucleotide-exchange factor SED4 (SED4) of Candida glabrata (strain ATCC 2001 / BCRC 20586 / JCM 3761 / NBRC 0622 / NRRL Y-65 / CBS 138) (Yeast).